We begin with the raw amino-acid sequence, 141 residues long: Putative pre-16S rRNA nuclease (141 aa).

The protein belongs to the YqgF nuclease family.

Its subcellular location is the cytoplasm. Functionally, could be a nuclease involved in processing of the 5'-end of pre-16S rRNA. The chain is Putative pre-16S rRNA nuclease from Aliivibrio salmonicida (strain LFI1238) (Vibrio salmonicida (strain LFI1238)).